The following is a 351-amino-acid chain: Uroporphyrinogen decarboxylase (351 aa).

Residues 32–36 (RQAGR), Phe-51, Asp-82, Tyr-157, Ser-211, and His-326 contribute to the substrate site.

It belongs to the uroporphyrinogen decarboxylase family. Homodimer.

It is found in the cytoplasm. It carries out the reaction uroporphyrinogen III + 4 H(+) = coproporphyrinogen III + 4 CO2. The protein operates within porphyrin-containing compound metabolism; protoporphyrin-IX biosynthesis; coproporphyrinogen-III from 5-aminolevulinate: step 4/4. Catalyzes the decarboxylation of four acetate groups of uroporphyrinogen III to yield coproporphyrinogen III. The polypeptide is Uroporphyrinogen decarboxylase (Caulobacter vibrioides (strain ATCC 19089 / CIP 103742 / CB 15) (Caulobacter crescentus)).